A 339-amino-acid chain; its full sequence is Probable E3 ubiquitin-protein ligase BAH1-like 1 (339 aa).

Residues 1–163 (MKFGAIYEEY…GSVSGRDFKS (163 aa)) enclose the SPX domain. The RING-type zinc finger occupies 235–284 (CPICLDTLFNPYALSCGHLFCKGCACGAASVYIFQGVKSAPPEAKCPVCR).

It belongs to the RING-type zinc finger family.

It catalyses the reaction S-ubiquitinyl-[E2 ubiquitin-conjugating enzyme]-L-cysteine + [acceptor protein]-L-lysine = [E2 ubiquitin-conjugating enzyme]-L-cysteine + N(6)-ubiquitinyl-[acceptor protein]-L-lysine.. It participates in protein modification; protein ubiquitination. This chain is Probable E3 ubiquitin-protein ligase BAH1-like 1, found in Oryza sativa subsp. indica (Rice).